The following is a 534-amino-acid chain: Acyl-CoA-binding domain-containing protein 5 (534 aa).

In terms of domain architecture, ACB spans 41–130 (HETRFEAAVK…MKKIIETMPM (90 aa)). Residue 52–61 (IQSLPKNGSF) participates in an acyl-CoA binding. Pro-63 is subject to Phosphothreonine. Residues 72–76 (YSFYK), Lys-98, and Tyr-117 each bind an acyl-CoA. Phosphothreonine is present on residues Leu-137 and Glu-172. The interval 181–225 (TPNAKTVNGKAESSDSGAESEEEEAQEEVKGAEQSDNDKKMMKKS) is disordered. A coiled-coil region spans residues 190-219 (KAESSDSGAESEEEEAQEEVKGAEQSDNDK). Phosphoserine is present on residues Ser-193, Ser-194, Ser-196, Ser-200, Ser-215, Ser-279, and Ser-313. Over residues 207–225 (EEVKGAEQSDNDKKMMKKS) the composition is skewed to basic and acidic residues. Residues 376 to 385 (EVKHGGEDGR) are compositionally biased toward basic and acidic residues. The interval 376-442 (EVKHGGEDGR…ERWGSDRGSR (67 aa)) is disordered. Thr-400 carries the phosphothreonine modification. Ser-428 carries the post-translational modification Phosphoserine. A compositionally biased stretch (basic and acidic residues) spans 431–441 (DGERWGSDRGS). A coiled-coil region spans residues 447–476 (EQIALVLMRLQEDMQNVLQRLQKLETLTAL). The residue at position 469 (Lys-469) is an N6-acetyllysine. Residues 506 to 526 (GVLTFAIIWPFIAQWLVYLYY) traverse the membrane as a helical segment.

This sequence belongs to the ATG37 family.

The protein resides in the peroxisome membrane. In terms of biological role, acyl-CoA binding protein which acts as the peroxisome receptor for pexophagy but is dispensable for aggrephagy and nonselective autophagy. Binds medium- and long-chain acyl-CoA esters. The sequence is that of Acyl-CoA-binding domain-containing protein 5 (ACBD5) from Homo sapiens (Human).